The sequence spans 567 residues: Serine/threonine-protein kinase SSN3 (567 aa).

In terms of domain architecture, Protein kinase spans 68-470; it reads YEIIGYIAAG…AINALDHSYF (403 aa). 74 to 82 is an ATP binding site; it reads IAAGTYGKV. The segment at 88–179 is disordered; that stretch reads RQSSKSSSST…RNSENTDNRR (92 aa). Residues 90–101 show a composition bias toward low complexity; the sequence is SSKSSSSTGSDS. 2 stretches are compositionally biased toward polar residues: residues 102–122 and 133–150; these read LAQDTKPTTEFSNTSSLQNAG and PNSNNISAGGNTNPELST. Positions 167–179 are enriched in basic and acidic residues; the sequence is GDKRNSENTDNRR. Lys-190 contributes to the ATP binding site. Asp-293 functions as the Proton acceptor in the catalytic mechanism. The span at 546 to 556 shows a compositional bias: low complexity; it reads AVSGNSSSQSS. A disordered region spans residues 546–567; it reads AVSGNSSSQSSRNMEPMKKKRK.

It belongs to the protein kinase superfamily. CMGC Ser/Thr protein kinase family. CDC2/CDKX subfamily. In terms of assembly, component of the SRB8-11 complex, a regulatory module of the Mediator complex. Mg(2+) is required as a cofactor.

It localises to the nucleus. It carries out the reaction L-seryl-[protein] + ATP = O-phospho-L-seryl-[protein] + ADP + H(+). The enzyme catalyses L-threonyl-[protein] + ATP = O-phospho-L-threonyl-[protein] + ADP + H(+). The catalysed reaction is [DNA-directed RNA polymerase] + ATP = phospho-[DNA-directed RNA polymerase] + ADP + H(+). In terms of biological role, component of the SRB8-11 complex. The SRB8-11 complex is a regulatory module of the Mediator complex which is itself involved in regulation of basal and activated RNA polymerase II-dependent transcription. The SRB8-11 complex may be involved in the transcriptional repression of a subset of genes regulated by Mediator. It may inhibit the association of the Mediator complex with RNA polymerase II to form the holoenzyme complex. The SRB8-11 complex phosphorylates the C-terminal domain (CTD) of the largest subunit of RNA polymerase II. The sequence is that of Serine/threonine-protein kinase SSN3 (SSN3) from Candida glabrata (strain ATCC 2001 / BCRC 20586 / JCM 3761 / NBRC 0622 / NRRL Y-65 / CBS 138) (Yeast).